Reading from the N-terminus, the 586-residue chain is Pescadillo homolog (586 aa).

Positions 1–54 (MGGLEKKKYERGSATNYITRNKARKKLQLSLPDFRRLCILKGIYPHEPKHKKKV) are required for 28S ribosomal RNA processing. The sufficient for nucleolar localization stretch occupies residues 1 to 257 (MGGLEKKKYE…PKIESQAQAE (257 aa)). Residue Lys-98 is modified to N6-acetyllysine. The interval 305–414 (VTAQEEDRRK…LLLPVAEYFP (110 aa)) is sufficient for interaction with MAP1B. Residues 321–414 (KHKKLFEGLK…LLLPVAEYFP (94 aa)) form the BRCT domain. The interval 447–508 (GEDPGNLEEE…QQRLGGKKPQ (62 aa)) is disordered. The segment covering 451-491 (GNLEEEEEDEDDEGDDSEGDGDVAVENEEEVVEAESEEEEE) has biased composition (acidic residues). Residue Lys-515 forms a Glycyl lysine isopeptide (Lys-Gly) (interchain with G-Cter in SUMO1); alternate linkage. A Glycyl lysine isopeptide (Lys-Gly) (interchain with G-Cter in SUMO2); alternate cross-link involves residue Lys-515. The interval 537 to 586 (MMKKREKYLYQKIMFGKRRKIREANKLAEKRKAHDDAVRSEKKAKRTRPV) is required for 28S ribosomal RNA processing. The segment covering 562-577 (KLAEKRKAHDDAVRSE) has biased composition (basic and acidic residues). The disordered stretch occupies residues 562–586 (KLAEKRKAHDDAVRSEKKAKRTRPV).

Belongs to the pescadillo family. Component of the PeBoW complex, composed of BOP1, PES1 and WDR12. The complex is held together by BOP1, which interacts with PES1 via its N-terminal domain and with WDR12 via a high-affinity interaction between the seven-bladed beta-propeller domains of the 2 proteins. The PeBoW complex associates with the 66S pre-ribosome. The PeBoW complex also associates with DDX27, PES1 interacts directly with DDX27. Interacts with IRS1 and UBTF. May interact with MAP1B. Sumoylated.

Its subcellular location is the nucleus. The protein resides in the nucleolus. The protein localises to the nucleoplasm. It localises to the chromosome. Its function is as follows. Component of the PeBoW complex, which is required for maturation of 28S and 5.8S ribosomal RNAs and formation of the 60S ribosome. The protein is Pescadillo homolog (Pes1) of Rattus norvegicus (Rat).